The following is a 607-amino-acid chain: Elongation factor 4 (607 aa).

In terms of domain architecture, tr-type G spans 11 to 193 (ENIRNFSIIA…KIVEVVPAPD (183 aa)). Residues 23–28 (DHGKST) and 140–143 (NKID) each bind GTP.

It belongs to the TRAFAC class translation factor GTPase superfamily. Classic translation factor GTPase family. LepA subfamily.

Its subcellular location is the cell membrane. It carries out the reaction GTP + H2O = GDP + phosphate + H(+). Required for accurate and efficient protein synthesis under certain stress conditions. May act as a fidelity factor of the translation reaction, by catalyzing a one-codon backward translocation of tRNAs on improperly translocated ribosomes. Back-translocation proceeds from a post-translocation (POST) complex to a pre-translocation (PRE) complex, thus giving elongation factor G a second chance to translocate the tRNAs correctly. Binds to ribosomes in a GTP-dependent manner. The polypeptide is Elongation factor 4 (Staphylococcus aureus (strain N315)).